The chain runs to 144 residues: Large ribosomal subunit protein uL15 (144 aa).

The tract at residues 1–59 (MRLNTISPAEGSKPTGKRSGRGIGSGLGKTGGVGHKGQKSRSGGRVKPGFEGGQMPIQR) is disordered. Residues 21–35 (RGIGSGLGKTGGVGH) are compositionally biased toward gly residues.

It belongs to the universal ribosomal protein uL15 family. As to quaternary structure, part of the 50S ribosomal subunit.

In terms of biological role, binds to the 23S rRNA. In Alteromonas mediterranea (strain DSM 17117 / CIP 110805 / LMG 28347 / Deep ecotype), this protein is Large ribosomal subunit protein uL15.